We begin with the raw amino-acid sequence, 227 residues long: Cytochrome c oxidase subunit 2 (227 aa).

The Mitochondrial intermembrane portion of the chain corresponds to 1 to 14 (MAYSFQLGLQDATS). The chain crosses the membrane as a helical span at residues 15–45 (PIMEELMNFHDHTLMIVFLISSLVLYIISLM). The Mitochondrial matrix portion of the chain corresponds to 46-59 (LTTKLTHTSTMDAQ). A helical membrane pass occupies residues 60-87 (EVETIWTILPAVILIMIALPSLRILYMM). At 88–227 (DEINNPVLTV…HFENWSASMI (140 aa)) the chain is on the mitochondrial intermembrane side. Residues histidine 161, cysteine 196, glutamate 198, cysteine 200, histidine 204, and methionine 207 each coordinate Cu cation. Position 198 (glutamate 198) interacts with Mg(2+).

It belongs to the cytochrome c oxidase subunit 2 family. In terms of assembly, component of the cytochrome c oxidase (complex IV, CIV), a multisubunit enzyme composed of 14 subunits. The complex is composed of a catalytic core of 3 subunits MT-CO1, MT-CO2 and MT-CO3, encoded in the mitochondrial DNA, and 11 supernumerary subunits COX4I, COX5A, COX5B, COX6A, COX6B, COX6C, COX7A, COX7B, COX7C, COX8 and NDUFA4, which are encoded in the nuclear genome. The complex exists as a monomer or a dimer and forms supercomplexes (SCs) in the inner mitochondrial membrane with NADH-ubiquinone oxidoreductase (complex I, CI) and ubiquinol-cytochrome c oxidoreductase (cytochrome b-c1 complex, complex III, CIII), resulting in different assemblies (supercomplex SCI(1)III(2)IV(1) and megacomplex MCI(2)III(2)IV(2)). Found in a complex with TMEM177, COA6, COX18, COX20, SCO1 and SCO2. Interacts with TMEM177 in a COX20-dependent manner. Interacts with COX20. Interacts with COX16. Cu cation serves as cofactor.

Its subcellular location is the mitochondrion inner membrane. The catalysed reaction is 4 Fe(II)-[cytochrome c] + O2 + 8 H(+)(in) = 4 Fe(III)-[cytochrome c] + 2 H2O + 4 H(+)(out). Its function is as follows. Component of the cytochrome c oxidase, the last enzyme in the mitochondrial electron transport chain which drives oxidative phosphorylation. The respiratory chain contains 3 multisubunit complexes succinate dehydrogenase (complex II, CII), ubiquinol-cytochrome c oxidoreductase (cytochrome b-c1 complex, complex III, CIII) and cytochrome c oxidase (complex IV, CIV), that cooperate to transfer electrons derived from NADH and succinate to molecular oxygen, creating an electrochemical gradient over the inner membrane that drives transmembrane transport and the ATP synthase. Cytochrome c oxidase is the component of the respiratory chain that catalyzes the reduction of oxygen to water. Electrons originating from reduced cytochrome c in the intermembrane space (IMS) are transferred via the dinuclear copper A center (CU(A)) of subunit 2 and heme A of subunit 1 to the active site in subunit 1, a binuclear center (BNC) formed by heme A3 and copper B (CU(B)). The BNC reduces molecular oxygen to 2 water molecules using 4 electrons from cytochrome c in the IMS and 4 protons from the mitochondrial matrix. The chain is Cytochrome c oxidase subunit 2 (MT-CO2) from Praomys jacksoni (African forest rat).